The chain runs to 496 residues: UDP-N-acetylmuramoylalanine--D-glutamate ligase (496 aa).

ATP is bound at residue 130 to 136 (GTNGKTT).

The protein belongs to the MurCDEF family.

It is found in the cytoplasm. The catalysed reaction is UDP-N-acetyl-alpha-D-muramoyl-L-alanine + D-glutamate + ATP = UDP-N-acetyl-alpha-D-muramoyl-L-alanyl-D-glutamate + ADP + phosphate + H(+). Its pathway is cell wall biogenesis; peptidoglycan biosynthesis. Cell wall formation. Catalyzes the addition of glutamate to the nucleotide precursor UDP-N-acetylmuramoyl-L-alanine (UMA). This Mycobacterium bovis (strain ATCC BAA-935 / AF2122/97) protein is UDP-N-acetylmuramoylalanine--D-glutamate ligase.